A 192-amino-acid polypeptide reads, in one-letter code: Pterin-4-alpha-carbinolamine dehydratase (192 aa).

This sequence belongs to the pterin-4-alpha-carbinolamine dehydratase family.

The catalysed reaction is (4aS,6R)-4a-hydroxy-L-erythro-5,6,7,8-tetrahydrobiopterin = (6R)-L-erythro-6,7-dihydrobiopterin + H2O. This Drosophila melanogaster (Fruit fly) protein is Pterin-4-alpha-carbinolamine dehydratase (Pcd).